The chain runs to 196 residues: Large ribosomal subunit protein bL25 (196 aa).

A disordered region spans residues 177-196 (VISIAPPKKDAEAETESAAG).

It belongs to the bacterial ribosomal protein bL25 family. CTC subfamily. Part of the 50S ribosomal subunit; part of the 5S rRNA/L5/L18/L25 subcomplex. Contacts the 5S rRNA. Binds to the 5S rRNA independently of L5 and L18.

Functionally, this is one of the proteins that binds to the 5S RNA in the ribosome where it forms part of the central protuberance. This chain is Large ribosomal subunit protein bL25, found in Chlorobium limicola (strain DSM 245 / NBRC 103803 / 6330).